The sequence spans 199 residues: Small ribosomal subunit protein uS7 (199 aa).

This sequence belongs to the universal ribosomal protein uS7 family. As to quaternary structure, part of the 30S ribosomal subunit.

One of the primary rRNA binding proteins, it binds directly to 16S rRNA where it nucleates assembly of the head domain of the 30S subunit. Is located at the subunit interface close to the decoding center. The chain is Small ribosomal subunit protein uS7 from Cenarchaeum symbiosum (strain A).